A 758-amino-acid polypeptide reads, in one-letter code: MLTHTLGFPRMGAHRELKKNLESYWKGAIGQEKLMASGRELRLRHWRLQQQAGIDLVPVGDFSYYDHMLDMVAMLGAVPPRFGWQGESVDLDTYFYMARGSSGHRTTTAMEMTKWFDTNYHYIVPEFYPGQRFRLARNRLFEELAEACIEGIQAKPVLPGPMTFIALGKEMVAGFDRWSHLDAVVEVYEEIVSRVAAKCSWIQLDEPILATDVPGPIRLRVRDVYRRLAAVAGPCRLMVATYFGALQENLDLALSLPVDGLHVDLVRAPGQLEKVLPCLPENMVLSLGLIDGRNVWRSNLRQAISTAQDAVVARGSDRVMIAPSCSLLHVPVDLAGEAVLDPRIRSWLAFARQKCQEVNVVRLALDGEDVTEVLQANDTAMENRRKSALVHRDAVRRRMADISPDMYCRRSSFEERKKQQAWLRLPTLPTTTIGSFPQVAGVRSARRSFKQGRISEEQYRAEMQRYIREAIAQQEALGLDVLVHGEPERNDMVEYFGEQLAGFCFTENGWVQGYGSRCVKPPIIYGDVERLKPMTMEWTTYAQQQTNRPLKGMLTGPVTMLCWSFVRDDQPRSATCKQIALAIRDEVQDLEQAGIKIIQVDEAALREGLPLRKSAWREYLGWAVDAFRLTASGVADSTQIHTHMCYSEFNHIAEWIAKMDADVISIEASRSNMELLGVLESFTYPNDIGPGVYDIHSPRVPSVAEMVELLRKASEVIPLERLWVNPDCGLKTRAWPETLASLRNMVAAAQKLRFFARG.

5-methyltetrahydropteroyltri-L-glutamate-binding positions include 15–18 and K114; that span reads RELK. L-homocysteine is bound by residues 433 to 435 and E486; that span reads IGS. L-methionine is bound by residues 433 to 435 and E486; that span reads IGS. 5-methyltetrahydropteroyltri-L-glutamate contacts are provided by residues 517-518 and W563; that span reads RC. Position 601 (D601) interacts with L-homocysteine. Position 601 (D601) interacts with L-methionine. E607 is a 5-methyltetrahydropteroyltri-L-glutamate binding site. Zn(2+)-binding residues include H643, C645, and E667. The active-site Proton donor is H696. C728 provides a ligand contact to Zn(2+).

It belongs to the vitamin-B12 independent methionine synthase family. The cofactor is Zn(2+).

It carries out the reaction 5-methyltetrahydropteroyltri-L-glutamate + L-homocysteine = tetrahydropteroyltri-L-glutamate + L-methionine. The protein operates within amino-acid biosynthesis; L-methionine biosynthesis via de novo pathway; L-methionine from L-homocysteine (MetE route): step 1/1. Catalyzes the transfer of a methyl group from 5-methyltetrahydrofolate to homocysteine resulting in methionine formation. The sequence is that of 5-methyltetrahydropteroyltriglutamate--homocysteine methyltransferase from Syntrophotalea carbinolica (strain DSM 2380 / NBRC 103641 / GraBd1) (Pelobacter carbinolicus).